Here is a 303-residue protein sequence, read N- to C-terminus: UPF0282 protein MM_2966 (303 aa).

It belongs to the UPF0282 family.

In Methanosarcina mazei (strain ATCC BAA-159 / DSM 3647 / Goe1 / Go1 / JCM 11833 / OCM 88) (Methanosarcina frisia), this protein is UPF0282 protein MM_2966.